The following is a 169-amino-acid chain: MYTSGYAHRASSFSSAASKIVRVSTENTTAGLISEVVYREDQPMMTQLLLLPLLQQLGQQSRWQLWLTPQQKLSREWVQASGLPLTKVMQISQLSPCHTVESMVRALRTGNYSVVIGWLADDLTEEEHAELVDAANEGNAMGFIMRPVSASSHATRQLSGLKIHSNLYH.

The tract at residues 106 to 112 (ALRTGNY) is ftsZ binding. Residues 162–169 (KIHSNLYH) form a lon protease binding region.

The protein belongs to the SulA family. As to quaternary structure, interacts with FtsZ. Is rapidly cleaved and degraded by the Lon protease once DNA damage is repaired.

Functionally, component of the SOS system and an inhibitor of cell division. Accumulation of SulA causes rapid cessation of cell division and the appearance of long, non-septate filaments. In the presence of GTP, binds a polymerization-competent form of FtsZ in a 1:1 ratio, thus inhibiting FtsZ polymerization and therefore preventing it from participating in the assembly of the Z ring. This mechanism prevents the premature segregation of damaged DNA to daughter cells during cell division. The polypeptide is Cell division inhibitor SulA (Escherichia coli O7:K1 (strain IAI39 / ExPEC)).